The sequence spans 249 residues: Probable endopeptidase YafL (249 aa).

A signal peptide spans 1–17 (MSLPSIPSFVLSGLLLI). C18 carries N-palmitoyl cysteine lipidation. Residue C18 is the site of S-diacylglycerol cysteine attachment. A NlpC/P60 domain is found at 116–243 (HNITEVAIHR…DHFLGARRIL (128 aa)). C147 (nucleophile) is an active-site residue. The Proton acceptor role is filled by H202. The active site involves E214.

The protein belongs to the peptidase C40 family.

The protein resides in the cell membrane. The sequence is that of Probable endopeptidase YafL (yafL) from Escherichia coli (strain K12).